Consider the following 76-residue polypeptide: Small proline-rich protein 2G (76 aa).

3 tandem repeats follow at residues 21-29, 30-38, and 39-47. Residues 21-47 form a 3 X 9 AA approximate tandem repeats region; sequence PKCPEPCPLPKCPEPCPPPKCPEPCPE. Positions 55–76 are disordered; that stretch reads QQKCPPVQTPPPCQQKCPPKSK.

It belongs to the cornifin (SPRR) family. Expressed in uterus.

It is found in the cytoplasm. In terms of biological role, cross-linked envelope protein of keratinocytes. It is a keratinocyte protein that first appears in the cell cytosol, but ultimately becomes cross-linked to membrane proteins by transglutaminase. All that results in the formation of an insoluble envelope beneath the plasma membrane. This chain is Small proline-rich protein 2G (Sprr2g), found in Mus musculus (Mouse).